Reading from the N-terminus, the 471-residue chain is Argininosuccinate lyase (471 aa).

Belongs to the lyase 1 family. Argininosuccinate lyase subfamily.

It localises to the cytoplasm. It carries out the reaction 2-(N(omega)-L-arginino)succinate = fumarate + L-arginine. Its pathway is amino-acid biosynthesis; L-arginine biosynthesis; L-arginine from L-ornithine and carbamoyl phosphate: step 3/3. The polypeptide is Argininosuccinate lyase (Acidiphilium cryptum (strain JF-5)).